The sequence spans 92 residues: Elongation factor 1-beta (92 aa).

The protein belongs to the EF-1-beta/EF-1-delta family.

Promotes the exchange of GDP for GTP in EF-1-alpha/GDP, thus allowing the regeneration of EF-1-alpha/GTP that could then be used to form the ternary complex EF-1-alpha/GTP/AAtRNA. The chain is Elongation factor 1-beta from Pyrobaculum arsenaticum (strain DSM 13514 / JCM 11321 / PZ6).